We begin with the raw amino-acid sequence, 118 residues long: Large ribosomal subunit protein bL20 (118 aa).

It belongs to the bacterial ribosomal protein bL20 family.

Functionally, binds directly to 23S ribosomal RNA and is necessary for the in vitro assembly process of the 50S ribosomal subunit. It is not involved in the protein synthesizing functions of that subunit. The chain is Large ribosomal subunit protein bL20 from Marinomonas sp. (strain MWYL1).